We begin with the raw amino-acid sequence, 433 residues long: MRVLVLGSGVIGTTSAYYLARAGFQVTVVDRQPAAAMETSFANAGQVSPGYASPWAAPGVPLKAIKWLLQRHAPLAIKATADIDQYLWMAQMLRNCTASRYTVNKERMVRLSEYSRDCLDELRLETGIAYEGRSLGTTQLFRTQAQLDNAAKDIAVLEQSGVPYELLDRDGIARVEPALAGVTGILSGALRLPNDQTGDCQLFTTRLAEMAVELGVEFRYGQNIERLDHAGDRINGVWIDGKLETADRYVLALGSYSPQLLKPLGIKAPVYPLKGYSLTVPITNPAMAPTSTILDETYKVAITRFDNRIRVGGMAEIAGFDLSLNPRRRETLEMIVGDLYPQGGDLTQASFWTGLRPTTPDGTPIVGATPFRNLFLNTGHGTLGWTMACGSGRLLADLIARKTPRISAEGLDISRYGNTQENAQHVNPAPAHQ.

3-17 provides a ligand contact to FAD; that stretch reads VLVLGSGVIGTTSAY.

The protein belongs to the DadA oxidoreductase family. FAD serves as cofactor.

It carries out the reaction a D-alpha-amino acid + A + H2O = a 2-oxocarboxylate + AH2 + NH4(+). The protein operates within amino-acid degradation; D-alanine degradation; NH(3) and pyruvate from D-alanine: step 1/1. Oxidative deamination of D-amino acids. This is D-amino acid dehydrogenase from Pseudomonas savastanoi pv. phaseolicola (strain 1448A / Race 6) (Pseudomonas syringae pv. phaseolicola (strain 1448A / Race 6)).